Consider the following 285-residue polypeptide: Phosphatase YwpJ (285 aa).

The active-site Nucleophile is the D7. D7 lines the Mg(2+) pocket. Residue L8 participates in phosphate binding. Mg(2+) is bound at residue D9. Phosphate is bound by residues 41–42 (TG) and K214. Mg(2+) is bound by residues D237 and S238. Phosphate contacts are provided by residues N240 and 282 to 283 (KH).

This sequence belongs to the HAD-like hydrolase superfamily. Cof family. Mg(2+) is required as a cofactor.

Its function is as follows. Catalyzes the dephosphorylation of phosphorylated 5-6 carbon sugars and monophosphate nucleotides (NMP) in vitro. To a lesser extent, dephosphorylates flavin mononucleotide (FMN) in vitro. The polypeptide is Phosphatase YwpJ (ywpJ) (Bacillus subtilis (strain 168)).